A 103-amino-acid chain; its full sequence is Large ribosomal subunit protein bL21 (103 aa).

The protein belongs to the bacterial ribosomal protein bL21 family. In terms of assembly, part of the 50S ribosomal subunit. Contacts protein L20.

This protein binds to 23S rRNA in the presence of protein L20. This is Large ribosomal subunit protein bL21 from Mycobacterium sp. (strain JLS).